The following is a 99-amino-acid chain: PE-PGRS family protein PE25 (99 aa).

The region spanning 1–92 is the PE domain; sequence MSFVITNPEA…GADKYATAEA (92 aa). At Ser2 the chain carries N-acetylserine.

The protein belongs to the mycobacterial PE family. In terms of assembly, forms a heterodimer with PPE41. The dimer forms a 1:1:1 heterotrimeric complex with EspG5. Interacts with PPE51.

Its subcellular location is the secreted. Its function is as follows. The PE25/PPE41 dimer induces both a strong humoral and cellular immune response. PE25 protein alone induces low response. The dimer induces necrosis, but not apoptosis, in mouse macrophage cells. It also induces activation and maturation of mouse dendritic cells and drives Th2-biased immune responses. In Mycobacterium tuberculosis (strain ATCC 25618 / H37Rv), this protein is PE-PGRS family protein PE25.